The primary structure comprises 63 residues: uncharacterized protein (63 aa).

This is an uncharacterized protein from Homo sapiens (Human).